The following is a 205-amino-acid chain: Large ribosomal subunit protein uL3 (205 aa).

It belongs to the universal ribosomal protein uL3 family. As to quaternary structure, part of the 50S ribosomal subunit. Forms a cluster with proteins L14 and L19.

Its function is as follows. One of the primary rRNA binding proteins, it binds directly near the 3'-end of the 23S rRNA, where it nucleates assembly of the 50S subunit. This Flavobacterium johnsoniae (strain ATCC 17061 / DSM 2064 / JCM 8514 / BCRC 14874 / CCUG 350202 / NBRC 14942 / NCIMB 11054 / UW101) (Cytophaga johnsonae) protein is Large ribosomal subunit protein uL3.